The primary structure comprises 576 residues: DNA primase (576 aa).

The CHC2-type zinc finger occupies 40–64 (CPFHNEKTPSFNVVAKKQFYHCFGC). In terms of domain architecture, Toprim spans 251–333 (DSIIVVEGYM…GLDAGFIFLP (83 aa)). Positions 257, 301, and 303 each coordinate Mg(2+).

Belongs to the DnaG primase family. As to quaternary structure, monomer. Interacts with DnaB. Zn(2+) is required as a cofactor. Mg(2+) serves as cofactor.

It catalyses the reaction ssDNA + n NTP = ssDNA/pppN(pN)n-1 hybrid + (n-1) diphosphate.. RNA polymerase that catalyzes the synthesis of short RNA molecules used as primers for DNA polymerase during DNA replication. This chain is DNA primase, found in Legionella pneumophila.